The chain runs to 185 residues: Elongation factor P (185 aa).

It belongs to the elongation factor P family.

The protein resides in the cytoplasm. It participates in protein biosynthesis; polypeptide chain elongation. Its function is as follows. Involved in peptide bond synthesis. Stimulates efficient translation and peptide-bond synthesis on native or reconstituted 70S ribosomes in vitro. Probably functions indirectly by altering the affinity of the ribosome for aminoacyl-tRNA, thus increasing their reactivity as acceptors for peptidyl transferase. This Agathobacter rectalis (strain ATCC 33656 / DSM 3377 / JCM 17463 / KCTC 5835 / VPI 0990) (Eubacterium rectale) protein is Elongation factor P.